The following is an 871-amino-acid chain: Coatomer subunit gamma-2 (871 aa).

Residues 1–11 (MIKKFDKKDEE) show a composition bias toward basic and acidic residues. Positions 1–20 (MIKKFDKKDEESGSGSNPFR) are disordered. 6 HEAT repeats span residues 64–101 (TEATEAFFAMTRLFQSNDQTLRRMCYLTIKEMATISED), 283–320 (RELAPAVSVLQLFCSSPKPALRYAAVRTLNKVAMKHPS), 321–355 (AVTACNLDLENLITDSNRSIATLAITTLLKTGSES), 356–392 (SVDRLMKQISSFVSEISDEFKVVVVQAISALCQKYPR), 395–430 (SVMMTFLSNMLRDDGGFEYKRAIVDCIIHIVEENPE), and 467–504 (PVPSKYIRFIFNRVVLENEAVRAAAVSALAKFGAQNEN). Phosphothreonine is present on threonine 594.

It belongs to the COPG family. As to quaternary structure, oligomeric complex. Binds to CDC42. Interacts with JAGN1. Interacts with TMED10 (via cytoplasmic domain).

It is found in the cytoplasm. Its subcellular location is the cytosol. It localises to the golgi apparatus membrane. The protein localises to the cytoplasmic vesicle. The protein resides in the COPI-coated vesicle membrane. In terms of biological role, the coatomer is a cytosolic protein complex that binds to dilysine motifs and reversibly associates with Golgi non-clathrin-coated vesicles, which further mediate biosynthetic protein transport from the ER, via the Golgi up to the trans Golgi network. Coatomer complex is required for budding from Golgi membranes, and is essential for the retrograde Golgi-to-ER transport of dilysine-tagged proteins. In mammals, the coatomer can only be recruited by membranes associated to ADP-ribosylation factors (ARFs), which are small GTP-binding proteins; the complex also influences the Golgi structural integrity, as well as the processing, activity, and endocytic recycling of LDL receptors. The protein is Coatomer subunit gamma-2 (COPG2) of Bos taurus (Bovine).